Reading from the N-terminus, the 825-residue chain is Penicillin-binding protein 1A (825 aa).

Topologically, residues 1 to 6 (MKFIKR) are cytoplasmic. The helical; Signal-anchor for type II membrane protein transmembrane segment at 7-27 (LLVFSLICIILGVTTIFGFYF) threads the bilayer. Residues 28–825 (YVKSDLPDVA…YSTSSGEELF (798 aa)) lie on the Periplasmic side of the membrane. The segment at 48–216 (MQVFSQDGKL…STMNPIYSVE (169 aa)) is transglycosylase. Catalysis depends on Glu-86, which acts as the Proton donor; for transglycosylase activity. Residues 413–752 (PRTQDGAITA…GKTALPAWVE (340 aa)) form a transpeptidase region. Residue Ser-471 is the Acyl-ester intermediate; for transpeptidase activity of the active site.

The protein in the N-terminal section; belongs to the glycosyltransferase 51 family. In the C-terminal section; belongs to the transpeptidase family.

It localises to the cell inner membrane. It carries out the reaction [GlcNAc-(1-&gt;4)-Mur2Ac(oyl-L-Ala-gamma-D-Glu-L-Lys-D-Ala-D-Ala)](n)-di-trans,octa-cis-undecaprenyl diphosphate + beta-D-GlcNAc-(1-&gt;4)-Mur2Ac(oyl-L-Ala-gamma-D-Glu-L-Lys-D-Ala-D-Ala)-di-trans,octa-cis-undecaprenyl diphosphate = [GlcNAc-(1-&gt;4)-Mur2Ac(oyl-L-Ala-gamma-D-Glu-L-Lys-D-Ala-D-Ala)](n+1)-di-trans,octa-cis-undecaprenyl diphosphate + di-trans,octa-cis-undecaprenyl diphosphate + H(+). The enzyme catalyses Preferential cleavage: (Ac)2-L-Lys-D-Ala-|-D-Ala. Also transpeptidation of peptidyl-alanyl moieties that are N-acyl substituents of D-alanine.. It participates in cell wall biogenesis; peptidoglycan biosynthesis. Its function is as follows. Cell wall formation. Synthesis of cross-linked peptidoglycan from the lipid intermediates. The enzyme has a penicillin-insensitive transglycosylase N-terminal domain (formation of linear glycan strands) and a penicillin-sensitive transpeptidase C-terminal domain (cross-linking of the peptide subunits). The protein is Penicillin-binding protein 1A (mrcA) of Vibrio cholerae serotype O1 (strain ATCC 39315 / El Tor Inaba N16961).